A 464-amino-acid polypeptide reads, in one-letter code: ATP synthase subunit beta (464 aa).

153–160 (GGAGVGKT) contacts ATP.

This sequence belongs to the ATPase alpha/beta chains family. F-type ATPases have 2 components, CF(1) - the catalytic core - and CF(0) - the membrane proton channel. CF(1) has five subunits: alpha(3), beta(3), gamma(1), delta(1), epsilon(1). CF(0) has three main subunits: a(1), b(2) and c(9-12). The alpha and beta chains form an alternating ring which encloses part of the gamma chain. CF(1) is attached to CF(0) by a central stalk formed by the gamma and epsilon chains, while a peripheral stalk is formed by the delta and b chains.

It is found in the cell inner membrane. The enzyme catalyses ATP + H2O + 4 H(+)(in) = ADP + phosphate + 5 H(+)(out). Its function is as follows. Produces ATP from ADP in the presence of a proton gradient across the membrane. The catalytic sites are hosted primarily by the beta subunits. This Burkholderia cenocepacia (strain ATCC BAA-245 / DSM 16553 / LMG 16656 / NCTC 13227 / J2315 / CF5610) (Burkholderia cepacia (strain J2315)) protein is ATP synthase subunit beta.